The following is a 603-amino-acid chain: Elongation factor 4 (603 aa).

Residues Ser7 to Arg189 form the tr-type G domain. GTP contacts are provided by residues Asp19–Thr24 and Asn136–Asp139.

This sequence belongs to the TRAFAC class translation factor GTPase superfamily. Classic translation factor GTPase family. LepA subfamily.

It is found in the cell inner membrane. It catalyses the reaction GTP + H2O = GDP + phosphate + H(+). Required for accurate and efficient protein synthesis under certain stress conditions. May act as a fidelity factor of the translation reaction, by catalyzing a one-codon backward translocation of tRNAs on improperly translocated ribosomes. Back-translocation proceeds from a post-translocation (POST) complex to a pre-translocation (PRE) complex, thus giving elongation factor G a second chance to translocate the tRNAs correctly. Binds to ribosomes in a GTP-dependent manner. The polypeptide is Elongation factor 4 (Thermosynechococcus vestitus (strain NIES-2133 / IAM M-273 / BP-1)).